A 325-amino-acid chain; its full sequence is Peroxidase 47 (325 aa).

The N-terminal stretch at 1–36 (MLTRFKKQNNKMVRANIVSMVLLMHAIVGFPFHARG) is a signal peptide. 4 disulfide bridges follow: cysteine 46-cysteine 125, cysteine 79-cysteine 84, cysteine 131-cysteine 321, and cysteine 209-cysteine 235. The Proton acceptor role is filled by histidine 77. The Ca(2+) site is built by aspartate 78, glycine 83, aspartate 85, and serine 87. Proline 172 provides a ligand contact to substrate. N-linked (GlcNAc...) asparagine glycosylation is present at asparagine 177. Histidine 202 lines the heme b pocket. Threonine 203 serves as a coordination point for Ca(2+). Residues aspartate 246, threonine 248, and aspartate 253 each coordinate Ca(2+).

This sequence belongs to the peroxidase family. Classical plant (class III) peroxidase subfamily. It depends on heme b as a cofactor. Ca(2+) serves as cofactor.

The protein resides in the secreted. It catalyses the reaction 2 a phenolic donor + H2O2 = 2 a phenolic radical donor + 2 H2O. Functionally, removal of H(2)O(2), oxidation of toxic reductants, biosynthesis and degradation of lignin, suberization, auxin catabolism, response to environmental stresses such as wounding, pathogen attack and oxidative stress. These functions might be dependent on each isozyme/isoform in each plant tissue. The chain is Peroxidase 47 (PER47) from Arabidopsis thaliana (Mouse-ear cress).